Here is a 265-residue protein sequence, read N- to C-terminus: 4-hydroxy-tetrahydrodipicolinate reductase (265 aa).

NAD(+) contacts are provided by residues 7-12 and D33; that span reads GASGRM. R34 provides a ligand contact to NADP(+). Residues 96-98 and 120-123 contribute to the NAD(+) site; these read GTT and AANM. The Proton donor/acceptor role is filled by H153. A (S)-2,3,4,5-tetrahydrodipicolinate-binding site is contributed by H154. K157 functions as the Proton donor in the catalytic mechanism. 163 to 164 provides a ligand contact to (S)-2,3,4,5-tetrahydrodipicolinate; the sequence is GT.

This sequence belongs to the DapB family.

It is found in the cytoplasm. It catalyses the reaction (S)-2,3,4,5-tetrahydrodipicolinate + NAD(+) + H2O = (2S,4S)-4-hydroxy-2,3,4,5-tetrahydrodipicolinate + NADH + H(+). It carries out the reaction (S)-2,3,4,5-tetrahydrodipicolinate + NADP(+) + H2O = (2S,4S)-4-hydroxy-2,3,4,5-tetrahydrodipicolinate + NADPH + H(+). It functions in the pathway amino-acid biosynthesis; L-lysine biosynthesis via DAP pathway; (S)-tetrahydrodipicolinate from L-aspartate: step 4/4. Catalyzes the conversion of 4-hydroxy-tetrahydrodipicolinate (HTPA) to tetrahydrodipicolinate. This Burkholderia orbicola (strain AU 1054) protein is 4-hydroxy-tetrahydrodipicolinate reductase.